A 289-amino-acid polypeptide reads, in one-letter code: Ribosomal RNA small subunit methyltransferase A (289 aa).

Asn-21, Leu-23, Gly-48, Glu-69, Asp-94, and Asn-120 together coordinate S-adenosyl-L-methionine.

The protein belongs to the class I-like SAM-binding methyltransferase superfamily. rRNA adenine N(6)-methyltransferase family. RsmA subfamily.

It localises to the cytoplasm. It carries out the reaction adenosine(1518)/adenosine(1519) in 16S rRNA + 4 S-adenosyl-L-methionine = N(6)-dimethyladenosine(1518)/N(6)-dimethyladenosine(1519) in 16S rRNA + 4 S-adenosyl-L-homocysteine + 4 H(+). Functionally, specifically dimethylates two adjacent adenosines (A1518 and A1519) in the loop of a conserved hairpin near the 3'-end of 16S rRNA in the 30S particle. May play a critical role in biogenesis of 30S subunits. The chain is Ribosomal RNA small subunit methyltransferase A from Haemophilus ducreyi (strain 35000HP / ATCC 700724).